Reading from the N-terminus, the 491-residue chain is Synaptotagmin-9 (491 aa).

At 1-52 (MPGARDALCHQALQLLAELCARGALEHDSCQDFIYHLRDRARPRLRDPDISV) the chain is on the vesicular side. A cysteine motif region spans residues 9–31 (CHQALQLLAELCARGALEHDSCQ). Residues 53–73 (SLLTLVVTACGLALFGVSLFV) traverse the membrane as a helical segment. Over 74–491 (SWKLCWVPWR…AHWHSLMEKR (418 aa)) the chain is Cytoplasmic. The segment covering 91–104 (SKDNNQEPLNYTDT) has biased composition (polar residues). The tract at residues 91–147 (SKDNNQEPLNYTDTETNEQENSEDFLDPPTPCPDSSMKISHTSPDIPLSTQPGGQEN) is disordered. The segment covering 105 to 116 (ETNEQENSEDFL) has biased composition (acidic residues). Polar residues predominate over residues 127-144 (MKISHTSPDIPLSTQPGG). At Ser177 the chain carries Phosphoserine. 2 consecutive C2 domains span residues 220–341 (ACGK…ILWK) and 352–485 (DLGE…AHWH). Positions 251, 257, 309, 310, 311, 314, 317, 383, 389, 443, and 445 each coordinate Ca(2+).

This sequence belongs to the synaptotagmin family. As to quaternary structure, homodimer; disulfide-linked via the cysteine motif. Can also form heterodimers with SYT3, SYT6, SYT7 and SYT10. Interacts with DNAJC5 and SNAP25, but not with HSC70. The interaction with DNAJC5 is stimulated tenfold in presence of calcium while the interaction with SNAP25 is inhibited. The cofactor is Ca(2+).

The protein resides in the cytoplasmic vesicle. It is found in the secretory vesicle. Its subcellular location is the synaptic vesicle membrane. May be involved in Ca(2+)-dependent exocytosis of secretory vesicles through Ca(2+) and phospholipid binding to the C2 domain or may serve as Ca(2+) sensors in the process of vesicular trafficking and exocytosis. The chain is Synaptotagmin-9 (Syt9) from Mus musculus (Mouse).